The sequence spans 201 residues: 3-isopropylmalate dehydratase small subunit (201 aa).

Belongs to the LeuD family. LeuD type 1 subfamily. In terms of assembly, heterodimer of LeuC and LeuD.

It carries out the reaction (2R,3S)-3-isopropylmalate = (2S)-2-isopropylmalate. Its pathway is amino-acid biosynthesis; L-leucine biosynthesis; L-leucine from 3-methyl-2-oxobutanoate: step 2/4. Catalyzes the isomerization between 2-isopropylmalate and 3-isopropylmalate, via the formation of 2-isopropylmaleate. In Rhodopseudomonas palustris (strain BisA53), this protein is 3-isopropylmalate dehydratase small subunit.